A 323-amino-acid chain; its full sequence is tRNA U34 carboxymethyltransferase (323 aa).

Residues Lys-91, Trp-105, Lys-110, Gly-130, 152–154, 181–182, Met-196, Tyr-200, and Arg-315 contribute to the carboxy-S-adenosyl-L-methionine site; these read DPT and IE.

This sequence belongs to the class I-like SAM-binding methyltransferase superfamily. CmoB family. Homotetramer.

It catalyses the reaction carboxy-S-adenosyl-L-methionine + 5-hydroxyuridine(34) in tRNA = 5-carboxymethoxyuridine(34) in tRNA + S-adenosyl-L-homocysteine + H(+). Catalyzes carboxymethyl transfer from carboxy-S-adenosyl-L-methionine (Cx-SAM) to 5-hydroxyuridine (ho5U) to form 5-carboxymethoxyuridine (cmo5U) at position 34 in tRNAs. The polypeptide is tRNA U34 carboxymethyltransferase (Shigella flexneri).